We begin with the raw amino-acid sequence, 187 residues long: MRKFLKSAIEYLAKDLDLDKELLEQIQYVVIVLTFEFIKCISVILIAGILGYFKESLIVILSMCFIKPFIGGYHEDSQLKCFIATLIITTSIIMLVTFNKLNLFSIVILNLFSIFSIYNKAPVIDSRFPLTKEHLIKKNKILSVTNSSILFLITLIFFKISWISQTITWTLLIQTLLLFNKYKREDS.

The next 5 helical transmembrane spans lie at V29 to I49, L50 to I70, C81 to F98, L103 to K120, and I149 to W169.

The protein belongs to the AgrB family.

The protein resides in the cell membrane. Functionally, may be involved in the proteolytic processing of a quorum sensing system signal molecule precursor. The protein is Putative AgrB-like protein 1 of Clostridium perfringens (strain 13 / Type A).